A 380-amino-acid polypeptide reads, in one-letter code: uncharacterized protein (380 aa).

2 consecutive HTH tetR-type domains span residues 3–63 and 201–262; these read ESAE…KEGL and VRTR…CAEI. Residues 225 to 244 constitute a DNA-binding region (H-T-H motif); sequence TISDITRKSNIRRATFYDHY.

This is an uncharacterized protein from Bacillus subtilis (strain 168).